We begin with the raw amino-acid sequence, 300 residues long: Rhodopsin (300 aa).

Residues 1 to 18 (LHMIHLHWYQYPPMNPMM) are Extracellular-facing. The helical transmembrane segment at 19–43 (YPLLLVFMLITGILCLAGNFVTIWV) threads the bilayer. Residues 44–55 (FMNTKSLRTPAN) lie on the Cytoplasmic side of the membrane. The chain crosses the membrane as a helical span at residues 56–78 (LLVVNLAMSDFLMMFTMFPPMMV). Topologically, residues 79 to 92 (TCYYHTWTLGATFC) are extracellular. Cysteine 92 and cysteine 168 form a disulfide bridge. A helical transmembrane segment spans residues 93-115 (QVYAFLGNLCGCASIWTMVFITF). The short motif at 116-118 (DRY) is the 'Ionic lock' involved in activated form stabilization element. Residues 116 to 134 (DRYNVIVKGVAGEPLSTKK) lie on the Cytoplasmic side of the membrane. Residues 135–155 (ASLWILTIWILSITWCIAPFF) traverse the membrane as a helical segment. The Extracellular portion of the chain corresponds to 156–181 (GWNRYVPEGNTGCGTDYLSEDILSRS). The helical transmembrane segment at 182–203 (YLYIYSTWVYFLPLAITIYCHV) threads the bilayer. Residues 204 to 244 (FIIKAVAAHEKGMRDQAKKMGIKSLRNEEAQKTSAECRLAK) are Cytoplasmic-facing. The chain crosses the membrane as a helical span at residues 245 to 266 (IAMTTVALWFIAWTPYLLINWV). Over 267–277 (GMFARSYLSPV) the chain is Extracellular. Residues 278–299 (YTIWGYVFAKANAVYNPIVYAI) form a helical membrane-spanning segment. An N6-(retinylidene)lysine modification is found at lysine 287.

Belongs to the G-protein coupled receptor 1 family. Opsin subfamily. In terms of assembly, homodimer. Interacts with GNAQ. Post-translationally, contains one covalently linked retinal chromophore.

The protein localises to the cell projection. It localises to the rhabdomere membrane. Photoreceptor required for image-forming vision at low light intensity. Can use both retinal and 3-dehydroretinal as visual pigment. Light-induced isomerization of 11-cis to all-trans retinal triggers a conformational change that activates signaling via G-proteins. Signaling via GNAQ probably mediates the activation of phospholipase C. This is Rhodopsin (RHO) from Cambarus maculatus (Freckled crayfish).